The following is a 417-amino-acid chain: uncharacterized protein (417 aa).

The tract at residues 1-24 (MSQPPINPLGQPQVPAAASPSGQP) is disordered. 4 consecutive transmembrane segments (helical) span residues 54–74 (VYDT…LLTA), 79–99 (LMLY…TLLI), 117–137 (AIVV…GAFV), and 143–163 (MLVF…LYFM). Over residues 211–228 (DLSASARMEEHEASQRQD) the composition is skewed to basic and acidic residues. 2 disordered regions span residues 211-283 (DLSA…FKDD) and 308-417 (IMPA…RKNK). Over residues 312–322 (SSRSPNFSTGT) the composition is skewed to polar residues. The span at 336-347 (EPSIPRVSSSSR) shows a compositional bias: low complexity. Residues 391-401 (STANLSPSNPF) are compositionally biased toward polar residues.

The protein belongs to the chlamydial CPn_0443/CT_005/TC_0273 family.

The protein resides in the cell membrane. This is an uncharacterized protein from Chlamydia pneumoniae (Chlamydophila pneumoniae).